The primary structure comprises 275 residues: Putative carbamate hydrolase RutD (275 aa).

This sequence belongs to the AB hydrolase superfamily. Hydrolase RutD family.

It carries out the reaction carbamate + 2 H(+) = NH4(+) + CO2. Involved in pyrimidine catabolism. May facilitate the hydrolysis of carbamate, a reaction that can also occur spontaneously. The polypeptide is Putative carbamate hydrolase RutD (Escherichia coli O6:H1 (strain CFT073 / ATCC 700928 / UPEC)).